The following is a 322-amino-acid chain: Protein-L-isoaspartate O-methyltransferase (322 aa).

A disordered region spans residues 1 to 101; it reads MSGERAKRFP…AKQGDRSAAP (101 aa). Over residues 14–29 the composition is skewed to basic and acidic residues; it reads EDLKREPRKPEGRVAE. Low complexity-rich tracts occupy residues 33–51 and 67–91; these read AGDA…PAAA and AANP…PQGG. The active site involves serine 170.

This sequence belongs to the methyltransferase superfamily. L-isoaspartyl/D-aspartyl protein methyltransferase family.

It is found in the cytoplasm. The catalysed reaction is [protein]-L-isoaspartate + S-adenosyl-L-methionine = [protein]-L-isoaspartate alpha-methyl ester + S-adenosyl-L-homocysteine. Its function is as follows. Catalyzes the methyl esterification of L-isoaspartyl residues in peptides and proteins that result from spontaneous decomposition of normal L-aspartyl and L-asparaginyl residues. It plays a role in the repair and/or degradation of damaged proteins. The sequence is that of Protein-L-isoaspartate O-methyltransferase from Burkholderia pseudomallei (strain 668).